A 252-amino-acid polypeptide reads, in one-letter code: Probable S-methyl-5'-thioinosine phosphorylase (252 aa).

Residues T8 and 44 to 45 contribute to the phosphate site; that span reads RH. M173 serves as a coordination point for substrate. A phosphate-binding site is contributed by T174. Residue 197 to 199 coordinates substrate; it reads NYA.

This sequence belongs to the PNP/MTAP phosphorylase family. MTAP subfamily. As to quaternary structure, homotrimer.

It catalyses the reaction S-methyl-5'-thioinosine + phosphate = 5-(methylsulfanyl)-alpha-D-ribose 1-phosphate + hypoxanthine. It participates in purine metabolism; purine nucleoside salvage. In terms of biological role, catalyzes the reversible phosphorylation of S-methyl-5'-thioinosine (MTI) to hypoxanthine and 5-methylthioribose-1-phosphate. Involved in the breakdown of S-methyl-5'-thioadenosine (MTA), a major by-product of polyamine biosynthesis. Catabolism of (MTA) occurs via deamination to MTI and phosphorolysis to hypoxanthine. This is Probable S-methyl-5'-thioinosine phosphorylase from Methanocaldococcus jannaschii (strain ATCC 43067 / DSM 2661 / JAL-1 / JCM 10045 / NBRC 100440) (Methanococcus jannaschii).